The following is a 95-amino-acid chain: Co-chaperonin GroES (95 aa).

It belongs to the GroES chaperonin family. Heptamer of 7 subunits arranged in a ring. Interacts with the chaperonin GroEL.

It localises to the cytoplasm. Functionally, together with the chaperonin GroEL, plays an essential role in assisting protein folding. The GroEL-GroES system forms a nano-cage that allows encapsulation of the non-native substrate proteins and provides a physical environment optimized to promote and accelerate protein folding. GroES binds to the apical surface of the GroEL ring, thereby capping the opening of the GroEL channel. The chain is Co-chaperonin GroES from Xylella fastidiosa (strain M23).